A 544-amino-acid chain; its full sequence is Chaperonin GroEL (544 aa).

Residues 30-33, lysine 51, 87-91, glycine 415, and aspartate 495 contribute to the ATP site; these read TLGP and DGTTT.

This sequence belongs to the chaperonin (HSP60) family. Forms a cylinder of 14 subunits composed of two heptameric rings stacked back-to-back. Interacts with the co-chaperonin GroES.

It is found in the cell outer membrane. It carries out the reaction ATP + H2O + a folded polypeptide = ADP + phosphate + an unfolded polypeptide.. Together with its co-chaperonin GroES, plays an essential role in assisting protein folding. The GroEL-GroES system forms a nano-cage that allows encapsulation of the non-native substrate proteins and provides a physical environment optimized to promote and accelerate protein folding. This chain is Chaperonin GroEL, found in Neisseria gonorrhoeae.